A 71-amino-acid polypeptide reads, in one-letter code: Large ribosomal subunit protein uL29 (71 aa).

Belongs to the universal ribosomal protein uL29 family.

This Aeropyrum pernix (strain ATCC 700893 / DSM 11879 / JCM 9820 / NBRC 100138 / K1) protein is Large ribosomal subunit protein uL29 (rpl29).